The chain runs to 1461 residues: Selection and upkeep of intraepithelial T-cells protein 5 (1461 aa).

Positions 1 to 24 are cleaved as a signal peptide; sequence MGAVGIPLTAHCVVLFLLQMVALS. The Extracellular portion of the chain corresponds to 25–1306; that stretch reads SEQFTVNGLE…CNKRNPFWKK (1282 aa). An Ig-like V-type domain is found at 26 to 139; that stretch reads EQFTVNGLES…FYEEHIIDVK (114 aa). Intrachain disulfides connect C49/C123 and C163/C217. Positions 142-231 constitute an Ig-like C1-type domain; the sequence is ATSSDIQILM…FVTHQEESIS (90 aa). N-linked (GlcNAc...) asparagine glycosylation is present at N200. Residues 1307–1327 form a helical membrane-spanning segment; that stretch reads YALDLGISVFTIIVVTLIMHL. Residues 1328 to 1345 are Cytoplasmic-facing; the sequence is KQREADQHFELNTLWSKD. Residues 1346-1366 form a helical membrane-spanning segment; the sequence is TSVILCVLIMFNNRLKALIYF. Residues 1367–1387 lie on the Extracellular side of the membrane; the sequence is RLYGFSPPGKAHKYIVNYILR. A helical membrane pass occupies residues 1388 to 1408; sequence FSHPVFCIVYSATILYMYLQI. The Cytoplasmic segment spans residues 1409 to 1427; that stretch reads QNKDSLFSLYNSWMVEMEM. Residues 1428–1448 traverse the membrane as a helical segment; sequence VLIFLLVIFNVKNIATVLLYF. Residues 1449-1461 lie on the Extracellular side of the membrane; it reads DSTTLRLFFWIKG.

It belongs to the SKINT family. As to expression, expressed in skin and, to a lower extent, testis.

Its subcellular location is the membrane. In terms of biological role, may act by engaging a cell surface molecule on immature T-cells in the embryonic thymus. The polypeptide is Selection and upkeep of intraepithelial T-cells protein 5 (Skint5) (Mus musculus (Mouse)).